Here is a 492-residue protein sequence, read N- to C-terminus: Probable cobyric acid synthase (492 aa).

A GATase cobBQ-type domain is found at 252 to 444; it reads PIEVNIVKFS…FHGILENFEF (193 aa). The active-site Nucleophile is C330. The active site involves H436.

This sequence belongs to the CobB/CobQ family. CobQ subfamily.

Its pathway is cofactor biosynthesis; adenosylcobalamin biosynthesis. Its function is as follows. Catalyzes amidations at positions B, D, E, and G on adenosylcobyrinic A,C-diamide. NH(2) groups are provided by glutamine, and one molecule of ATP is hydrogenolyzed for each amidation. The polypeptide is Probable cobyric acid synthase (Methanococcus maripaludis (strain C6 / ATCC BAA-1332)).